A 159-amino-acid polypeptide reads, in one-letter code: MAVQLVLNFIIAVFWLFVTNSYTTNNFVLGFIFGLVLVYLLHRVLPGRFYVITLYRIIKLVIIFLIELIKANFDVLKIIIKPSIKNEPGFFVYHTDLKKDWQIVLLSNLITLTPGTVVLGVSDDRTKIYIHAIDFSTKEQEVESIKTSLEKIVREVGEI.

4 helical membrane passes run 1-21, 27-47, 49-69, and 101-121; these read MAVQ…VTNS, FVLG…VLPG, FYVI…IELI, and WQIV…VLGV.

This sequence belongs to the CPA3 antiporters (TC 2.A.63) subunit E family. In terms of assembly, may form a heterooligomeric complex that consists of seven subunits: mnhA1, mnhB1, mnhC1, mnhD1, mnhE1, mnhF1 and mnhG1.

The protein resides in the cell membrane. In terms of biological role, mnh complex is a Na(+)/H(+) antiporter involved in Na(+) excretion. In Staphylococcus aureus (strain Mu3 / ATCC 700698), this protein is Na(+)/H(+) antiporter subunit E1 (mnhE1).